The primary structure comprises 257 residues: Protein UL24 homolog (257 aa).

The tract at residues 193–257 (KKPKMDRGGK…PRAGPACSGP (65 aa)) is disordered.

This sequence belongs to the herpesviridae UL24 family.

Its subcellular location is the virion. The protein localises to the host cytoplasm. It is found in the host nucleus. The protein resides in the host nucleolus. It localises to the host Golgi apparatus. Functionally, may participate in nuclear egress of viral particles. Plays a role in the dispersal of several host nucleolar proteins including NCL/nucleolin and NPM1. Since deletion of host NCL/nucleolin negatively impact on nuclear egress, UL24 supposedly acts on this process through its effect on host nucleoli. Induces cell cycle arrest in host cells at the G2/M phase following by apoptosis. The mechanism involves the inhibition of host mitotic complex cyclin-B/CDK1. The chain is Protein UL24 homolog (ORF20) from Homo sapiens (Human).